The following is a 300-amino-acid chain: NAD kinase (300 aa).

Asp-78 functions as the Proton acceptor in the catalytic mechanism. NAD(+) contacts are provided by residues 78-79, 152-153, His-163, Arg-180, Asp-182, and 193-198; these read DG, ND, and TAYALS.

This sequence belongs to the NAD kinase family. A divalent metal cation serves as cofactor.

Its subcellular location is the cytoplasm. It carries out the reaction NAD(+) + ATP = ADP + NADP(+) + H(+). Its function is as follows. Involved in the regulation of the intracellular balance of NAD and NADP, and is a key enzyme in the biosynthesis of NADP. Catalyzes specifically the phosphorylation on 2'-hydroxyl of the adenosine moiety of NAD to yield NADP. The sequence is that of NAD kinase from Alcanivorax borkumensis (strain ATCC 700651 / DSM 11573 / NCIMB 13689 / SK2).